Here is a 302-residue protein sequence, read N- to C-terminus: Nucleotide-binding protein RHOS4_02640 (302 aa).

15-22 (GPSGAGRT) is a binding site for ATP. GTP is bound at residue 62-65 (DVRN).

This sequence belongs to the RapZ-like family.

Displays ATPase and GTPase activities. In Cereibacter sphaeroides (strain ATCC 17023 / DSM 158 / JCM 6121 / CCUG 31486 / LMG 2827 / NBRC 12203 / NCIMB 8253 / ATH 2.4.1.) (Rhodobacter sphaeroides), this protein is Nucleotide-binding protein RHOS4_02640.